We begin with the raw amino-acid sequence, 103 residues long: uncharacterized protein (103 aa).

This is an uncharacterized protein from Escherichia coli (strain UTI89 / UPEC).